The chain runs to 237 residues: Ribose-5-phosphate isomerase A (237 aa).

Substrate contacts are provided by residues 33–36 (TGST), 88–91 (DGAD), and 101–104 (KGRG). The active-site Proton acceptor is the Glu110. Position 128 (Lys128) interacts with substrate.

Belongs to the ribose 5-phosphate isomerase family. As to quaternary structure, homodimer.

It carries out the reaction aldehydo-D-ribose 5-phosphate = D-ribulose 5-phosphate. It functions in the pathway carbohydrate degradation; pentose phosphate pathway; D-ribose 5-phosphate from D-ribulose 5-phosphate (non-oxidative stage): step 1/1. Its function is as follows. Catalyzes the reversible conversion of ribose-5-phosphate to ribulose 5-phosphate. In Methanoregula boonei (strain DSM 21154 / JCM 14090 / 6A8), this protein is Ribose-5-phosphate isomerase A.